We begin with the raw amino-acid sequence, 618 residues long: MDRVSNLPEEVRCHILSFLPTKHAALTSVLSKSWLNLWKFETNLDIDDSDFLHPEEGKAERDEIRQSFVEFVDGVLALQGDSPIEKFSLKCITGIHPDHVNRWICNVLQRGVSDLYLFTDFSDEDTEEDGGYRLPQEMFVSRTLVKLKLRSEHCVNWWHWDIGASLPNLKSLNIDSDLIFFGEMEKFLSSFPVLEEVHMANMEWRELDETMSSASLTKLSIHGTGVEEFEHPKSISIDTPNLLYLNYSDLVAEDYPLDDEGDVVLQFCNVVKLINGIQNIQTLYLTEDTLEVLTMCCESMPVFNNLKTLGLKSDEGRGWQAVPALLRNCPHLEFLIIEGLLHSVTDKCGDACDCISREDKGRSLISCPVKKLEVRGFRGTIREKEMIRHFLEYFPCLDEMEIDAEENDSTNFEVPRILKVVAYRLHDVVSTEIVGHWQSSAQSGGWSQTQMDEMYYELAPRNKERIYDMFFFMRRASSTVPPPPPQEMSQDYLQMQLEVADLKERQRDQEAKLADLKERLRAMLDMIVDQNPIIASALRAREATNSEREKASSGQEMTEKERDYDALFDIIVEQNPMLASAVRALRATDSERAETSSNQEMTELGQATATYFPPREGE.

In terms of domain architecture, F-box spans 1 to 47; it reads MDRVSNLPEEVRCHILSFLPTKHAALTSVLSKSWLNLWKFETNLDID. LRR repeat units follow at residues 147–176, 196–223, 224–249, 282–313, 314–339, and 354–379; these read LKLRSEHCVNWWHWDIGASLPNLKSLNIDS, EVHMANMEWRELDETMSSASLTKLSIHG, TGVEEFEHPKSISIDTPNLLYLNYSD, TLYLTEDTLEVLTMCCESMPVFNNLKTLGLKS, DEGRGWQAVPALLRNCPHLEFLIIEG, and CISREDKGRSLISCPVKKLEVRGFRG. The interval 587–618 is disordered; it reads ATDSERAETSSNQEMTELGQATATYFPPREGE. Positions 595-609 are enriched in polar residues; it reads TSSNQEMTELGQATA.

The protein is F-box/LRR-repeat protein At3g58940 of Arabidopsis thaliana (Mouse-ear cress).